The primary structure comprises 420 residues: Putative transporter AmpG 3 (420 aa).

A run of 12 helical transmembrane segments spans residues 6-26, 41-61, 79-99, 104-124, 141-161, 166-186, 230-250, 274-294, 297-317, 324-344, 359-381, and 386-406; these read YLIGILLLGLISGLTFNLIFF, IVGSISLAAFPYCLKVIWSPF, GWALVSQIFLILTMMWFLKRS, LCITAIILFIIAFCSSTQDIV, IAFTFSSIGFRLGMLLGSVGA, IIFGWNTVYKFALFITMVGPI, LLLIILFVFLYKAADSIPMAM, LLIMIVGGTLGGILAAKIGIF, VLIGGVIQLLSPIMFMILATI, FIITITIQNFCSGFAGTIISI, YSISSSFSSLSRIILASLGGICA, and WPVFFLCNTLFSMLFIPIFYI.

The protein belongs to the major facilitator superfamily.

It is found in the cell inner membrane. The protein is Putative transporter AmpG 3 (ampG3) of Rickettsia typhi (strain ATCC VR-144 / Wilmington).